The sequence spans 197 residues: Small ribosomal subunit protein uS7 (197 aa).

It belongs to the universal ribosomal protein uS7 family.

The protein is Small ribosomal subunit protein uS7 (RPS5) of Cicer arietinum (Chickpea).